The primary structure comprises 316 residues: Tetrahydromethanopterin S-methyltransferase subunit H (316 aa).

This sequence belongs to the MtrH family. In terms of assembly, the complex is composed of 8 subunits; MtrA, MtrB, MtrC, MtrD, MtrE, MtrF, MtrG and MtrH.

It carries out the reaction 5-methyl-5,6,7,8-tetrahydromethanopterin + coenzyme M + 2 Na(+)(in) = 5,6,7,8-tetrahydromethanopterin + methyl-coenzyme M + 2 Na(+)(out). It functions in the pathway one-carbon metabolism; methanogenesis from CO(2); methyl-coenzyme M from 5,10-methylene-5,6,7,8-tetrahydromethanopterin: step 2/2. In terms of biological role, part of a complex that catalyzes the formation of methyl-coenzyme M and tetrahydromethanopterin from coenzyme M and methyl-tetrahydromethanopterin. This is an energy-conserving, sodium-ion translocating step. MtrH catalyzes the transfer of the methyl group from methyl-tetrahydromethanopterin to the corrinoid prosthetic group of MtrA. This is Tetrahydromethanopterin S-methyltransferase subunit H from Methanosarcina acetivorans (strain ATCC 35395 / DSM 2834 / JCM 12185 / C2A).